A 352-amino-acid chain; its full sequence is C-C chemokine receptor type 5 (352 aa).

The Extracellular portion of the chain corresponds to 1–30; the sequence is MDYQVSSPTYDIDYYTSEPCQKIKVKQIAA. At Tyr3 the chain carries Sulfotyrosine. Residues Ser6 and Ser7 are each glycosylated (O-linked (GalNAc...) serine). Residues Tyr10, Tyr14, and Tyr15 each carry the sulfotyrosine modification. 2 disulfides stabilise this stretch: Cys20–Cys269 and Cys101–Cys178. Residues 31–58 traverse the membrane as a helical segment; that stretch reads RLLPPLYSLVFIFGFVGNILVVLILINC. Topologically, residues 59-68 are cytoplasmic; it reads KRLKSMTDIY. A helical membrane pass occupies residues 69-89; that stretch reads LLNLAISDLLFLLTVPFWAHY. The Extracellular segment spans residues 90–102; it reads AAAQWDFGNTMCQ. The helical transmembrane segment at 103 to 124 threads the bilayer; that stretch reads LLTGLYFIGFFSGIFFIILLTI. The Cytoplasmic segment spans residues 125-141; sequence DRYLAIVHAVFALKART. A helical transmembrane segment spans residues 142–166; the sequence is VTFGVVTSVITWVVAVFASLPRIIF. The Extracellular portion of the chain corresponds to 167–198; that stretch reads TRSQREGLHYTCSSHFPYSQYQFWKNFQTLKI. A helical transmembrane segment spans residues 199–218; it reads VILGLVLPLLVMVICYSGIL. At 219–235 the chain is on the cytoplasmic side; it reads KTLLRCRNDKKRHRAVR. Residues 236–260 form a helical membrane-spanning segment; sequence LIFTIMIVYFLFWAPYNIVLLLNTF. The Extracellular portion of the chain corresponds to 261-277; that stretch reads QEFFGLNNCSSSNRLDQ. Residues 278-301 traverse the membrane as a helical segment; sequence AMQVTETLGMTHCCINPIIYAFVG. Residues 302-352 are Cytoplasmic-facing; sequence EKFRNYLLVFFQKHIAKRFCKCCSIFQQDAPERASSVYTRSTGEQETSVGL. S-palmitoyl cysteine attachment occurs at residues Cys321, Cys323, and Cys324. Ser336, Ser337, Ser342, and Ser349 each carry phosphoserine; by BARK1.

Belongs to the G-protein coupled receptor 1 family. Interacts with PRAF2. Efficient ligand binding to CCL3/MIP-1alpha and CCL4/MIP-1beta requires sulfation, O-glycosylation and sialic acid modifications. Glycosylation on Ser-6 is required for efficient binding of CCL4. Interacts with GRK2. Interacts with ARRB1 and ARRB2. Interacts with CNIH4. Interacts with S100A4; this interaction stimulates T-lymphocyte chemotaxis. Post-translationally, sulfated on at least 2 of the N-terminal tyrosines. Sulfation is required for efficient binding of the chemokines, CCL3 and CCL4. In terms of processing, palmitoylation in the C-terminal is important for cell surface expression. Phosphorylation on serine residues in the C-terminal is stimulated by binding CC chemokines especially by APO-RANTES. Post-translationally, O-glycosylated, but not N-glycosylated. Ser-6 appears to be the major site even if Ser-7 may be also O-glycosylated. Also sialylated glycans present which contribute to chemokine binding. Thr-16 and Ser-17 may also be glycosylated and, if so, with small moieties such as a T-antigen.

It is found in the cell membrane. Functionally, receptor for a number of inflammatory CC-chemokines including CCL3/MIP-1-alpha, CCL4/MIP-1-beta and RANTES and subsequently transduces a signal by increasing the intracellular calcium ion level. May play a role in the control of granulocytic lineage proliferation or differentiation. Participates in T-lymphocyte migration to the infection site by acting as a chemotactic receptor. This chain is C-C chemokine receptor type 5 (CCR5), found in Chlorocebus sabaeus (Green monkey).